The primary structure comprises 239 residues: MDKLLNKKIKVKQSNELTEAAYYLSLKAKRVLWLCLMQTYFTASVSEDDDEMAVLGDSTFKVKVADYQQIFQVSRNQAIKDVKEGVFELSRSAVIFYPKEGSFDCVARPWLTEAGSRSARGIWEIEFNHKLLRYIYGLTNQFTTYSLRDCGSLRNPRTIRLYESLAQFKSSGLWVTTHAWLNDRFLLPESQQKNLAELKRSFLDPALKQINEKTPLLAKYSIDDSGKFLFSIIDKQNPV.

It belongs to the initiator RepB protein family.

Functionally, mutations in ORF 239 affects the incN plasmid pUC1 E.coli polA-independence but not its autonomous replication ability. This is an uncharacterized protein from Escherichia coli.